The chain runs to 497 residues: Putative diacyglycerol O-acyltransferase MT3584 (497 aa).

His143 serves as the catalytic Proton acceptor.

The protein belongs to the long-chain O-acyltransferase family.

The catalysed reaction is an acyl-CoA + a 1,2-diacyl-sn-glycerol = a triacyl-sn-glycerol + CoA. The protein operates within glycerolipid metabolism; triacylglycerol biosynthesis. This Mycobacterium tuberculosis (strain CDC 1551 / Oshkosh) protein is Putative diacyglycerol O-acyltransferase MT3584.